The sequence spans 368 residues: Probable endopolygalacturonase I (368 aa).

The N-terminal stretch at 1–18 (MRSVEILGLAALGSLVAA) is a signal peptide. The propeptide occupies 19 to 31 (APSPSRVSNSAKK). Residues Cys35 and Cys50 are joined by a disulfide bond. 2 PbH1 repeats span residues 162 to 192 (ATNLQLTDITIDNSDGDENGGHNTDAFDIGE) and 193 to 214 (SNGVYIRGAVVKNQDDCIAINS). Asp207 acts as the Proton donor in catalysis. A disulfide bridge connects residues Cys209 and Cys225. Residue His229 is part of the active site. PbH1 repeat units lie at residues 244–265 (VKNVTITDSTISDSDNGVRIKT), 273–295 (VGDVTYSNIKLSNIAKYGIVIEQ), and 307–328 (TTGVPITGLTIDGITGSVASNA). Asn246 carries an N-linked (GlcNAc...) asparagine glycan. 2 cysteine pairs are disulfide-bonded: Cys335-Cys340 and Cys359-Cys368.

Belongs to the glycosyl hydrolase 28 family.

It is found in the secreted. It carries out the reaction (1,4-alpha-D-galacturonosyl)n+m + H2O = (1,4-alpha-D-galacturonosyl)n + (1,4-alpha-D-galacturonosyl)m.. In terms of biological role, involved in maceration and soft-rotting of plant tissue. Hydrolyzes the 1,4-alpha glycosidic bonds of de-esterified pectate in the smooth region of the plant cell wall. In Aspergillus clavatus (strain ATCC 1007 / CBS 513.65 / DSM 816 / NCTC 3887 / NRRL 1 / QM 1276 / 107), this protein is Probable endopolygalacturonase I (pgaI).